A 451-amino-acid chain; its full sequence is tRNA modification GTPase MnmE (451 aa).

(6S)-5-formyl-5,6,7,8-tetrahydrofolate contacts are provided by Arg23, Glu80, and Lys119. One can recognise a TrmE-type G domain in the interval 215-372; that stretch reads GIKVVLTGQP…LRTVLLKTVG (158 aa). Residue Asn225 participates in K(+) binding. GTP is bound by residues 225–230, 244–250, and 269–272; these read NVGKSS, TEIPGTT, and DTAG. Ser229 lines the Mg(2+) pocket. Positions 244, 246, and 249 each coordinate K(+). Thr250 is a Mg(2+) binding site. (6S)-5-formyl-5,6,7,8-tetrahydrofolate is bound at residue Lys451.

Belongs to the TRAFAC class TrmE-Era-EngA-EngB-Septin-like GTPase superfamily. TrmE GTPase family. In terms of assembly, homodimer. Heterotetramer of two MnmE and two MnmG subunits. It depends on K(+) as a cofactor.

It is found in the cytoplasm. Exhibits a very high intrinsic GTPase hydrolysis rate. Involved in the addition of a carboxymethylaminomethyl (cmnm) group at the wobble position (U34) of certain tRNAs, forming tRNA-cmnm(5)s(2)U34. This Nitrosomonas eutropha (strain DSM 101675 / C91 / Nm57) protein is tRNA modification GTPase MnmE.